The primary structure comprises 1190 residues: DNA-directed RNA polymerase subunit beta (1190 aa).

A disordered region spans residues 1155–1190; sequence ENFDDDDDHAPDAIMVDVKPAEREEAGEEKDAVTKE. Basic and acidic residues predominate over residues 1173-1190; sequence KPAEREEAGEEKDAVTKE.

It belongs to the RNA polymerase beta chain family. As to quaternary structure, the RNAP catalytic core consists of 2 alpha, 1 beta, 1 beta' and 1 omega subunit. When a sigma factor is associated with the core the holoenzyme is formed, which can initiate transcription.

It carries out the reaction RNA(n) + a ribonucleoside 5'-triphosphate = RNA(n+1) + diphosphate. DNA-dependent RNA polymerase catalyzes the transcription of DNA into RNA using the four ribonucleoside triphosphates as substrates. In Geobacillus kaustophilus (strain HTA426), this protein is DNA-directed RNA polymerase subunit beta.